We begin with the raw amino-acid sequence, 513 residues long: Activin receptor type-2A (513 aa).

A signal peptide spans 1-19 (MGAAAKLAFAVFLISCSSG). Residues 20–135 (AILGRSETQE…TSNPVTPKPP (116 aa)) lie on the Extracellular side of the membrane. Intrachain disulfides connect Cys30-Cys60, Cys50-Cys78, Cys85-Cys104, Cys91-Cys103, and Cys105-Cys110. Asn43 and Asn66 each carry an N-linked (GlcNAc...) asparagine glycan. The helical transmembrane segment at 136–161 (YYNILLYSLVPLMLIAGIVICAFWVY) threads the bilayer. Residues 162–513 (RHHMMAYPPV…VDFPPKESSL (352 aa)) are Cytoplasmic-facing. A Protein kinase domain is found at 192–485 (LQLLEVKARG…GERITQMQRL (294 aa)). ATP-binding positions include 198 to 206 (KARGRFGCV) and Lys219. The active-site Proton acceptor is Asp322.

Belongs to the protein kinase superfamily. TKL Ser/Thr protein kinase family. TGFB receptor subfamily. In terms of assembly, part of a complex consisting of MAGI2/ARIP1, ACVR2A, ACVR1B and SMAD3. Interacts with MAGI2/ARIP1. Interacts with type I receptor ACVR1. Interacts with BMP7. Interacts with TSC22D1/TSC-22. Interacts with activin A/INHBA. It depends on Mg(2+) as a cofactor. Mn(2+) serves as cofactor.

The protein resides in the cell membrane. It carries out the reaction L-threonyl-[receptor-protein] + ATP = O-phospho-L-threonyl-[receptor-protein] + ADP + H(+). It catalyses the reaction L-seryl-[receptor-protein] + ATP = O-phospho-L-seryl-[receptor-protein] + ADP + H(+). Functionally, on ligand binding, forms a receptor complex consisting of two type II and two type I transmembrane serine/threonine kinases. Type II receptors phosphorylate and activate type I receptors which autophosphorylate, then bind and activate SMAD transcriptional regulators. Receptor for activin A, activin B and inhibin A. Mediates induction of adipogenesis by GDF6. This is Activin receptor type-2A from Rattus norvegicus (Rat).